We begin with the raw amino-acid sequence, 345 residues long: Chorismate synthase (345 aa).

The protein belongs to the chorismate synthase family. As to quaternary structure, homotetramer. Requires FMNH2 as cofactor.

It carries out the reaction 5-O-(1-carboxyvinyl)-3-phosphoshikimate = chorismate + phosphate. The protein operates within metabolic intermediate biosynthesis; chorismate biosynthesis; chorismate from D-erythrose 4-phosphate and phosphoenolpyruvate: step 7/7. This chain is Chorismate synthase (aroC), found in Carsonella ruddii (strain PV).